A 438-amino-acid polypeptide reads, in one-letter code: Transcription termination factor Rho (438 aa).

Residues 70-145 (YILFTGILEI…LKIEAINYLP (76 aa)) enclose the Rho RNA-BD domain. Residues 188-193 (GKGQRA), 200-205 (RTGKTE), and arginine 231 contribute to the ATP site.

It belongs to the Rho family. As to quaternary structure, homohexamer. The homohexamer assembles into an open ring structure.

Facilitates transcription termination by a mechanism that involves Rho binding to the nascent RNA, activation of Rho's RNA-dependent ATPase activity, and release of the mRNA from the DNA template. In Helicobacter pylori (strain J99 / ATCC 700824) (Campylobacter pylori J99), this protein is Transcription termination factor Rho.